Consider the following 448-residue polypeptide: Trigger factor (448 aa).

The region spanning 160–245 (GDMLLMKVES…IQEIREEKLP (86 aa)) is the PPIase FKBP-type domain.

The protein belongs to the FKBP-type PPIase family. Tig subfamily.

It is found in the cytoplasm. The catalysed reaction is [protein]-peptidylproline (omega=180) = [protein]-peptidylproline (omega=0). Involved in protein export. Acts as a chaperone by maintaining the newly synthesized protein in an open conformation. Functions as a peptidyl-prolyl cis-trans isomerase. The sequence is that of Trigger factor from Dehalococcoides mccartyi (strain ATCC BAA-2266 / KCTC 15142 / 195) (Dehalococcoides ethenogenes (strain 195)).